Reading from the N-terminus, the 216-residue chain is Protein-L-isoaspartate O-methyltransferase (216 aa).

Serine 63 is an active-site residue.

It belongs to the methyltransferase superfamily. L-isoaspartyl/D-aspartyl protein methyltransferase family.

The protein localises to the cytoplasm. The catalysed reaction is [protein]-L-isoaspartate + S-adenosyl-L-methionine = [protein]-L-isoaspartate alpha-methyl ester + S-adenosyl-L-homocysteine. Catalyzes the methyl esterification of L-isoaspartyl residues in peptides and proteins that result from spontaneous decomposition of normal L-aspartyl and L-asparaginyl residues. It plays a role in the repair and/or degradation of damaged proteins. This is Protein-L-isoaspartate O-methyltransferase from Rhodopseudomonas palustris (strain BisB18).